The following is a 578-amino-acid chain: Potassium-transporting ATPase potassium-binding subunit (578 aa).

The next 11 membrane-spanning stretches (helical) occupy residues 3–23 (AAALAEIAAFFGLLTAAAVPL), 67–87 (AAAALTFNAAGLLAVFALERL), 95–115 (PAGLPAVSPLVAWNTAVSFAT), 136–156 (ALTVQNFLSAATGISVLAALV), 181–201 (LLLPLAAALALLLAWQGVPQT), 264–284 (LEALSILLVPAALCFAFGALV), 291–311 (WTVYSAMLAILVPLTVATVSA), 396–416 (GLYGMLLFAILAVFLAGLMVG), 436–456 (LAILAPSATVLLGTAAACLLP), 504–524 (VAMLVGRYWVMLPVLAIAGAF), and 543–563 (LFAGLLVATVLLVGALTFLPA).

The protein belongs to the KdpA family. The system is composed of three essential subunits: KdpA, KdpB and KdpC.

It is found in the cell inner membrane. In terms of biological role, part of the high-affinity ATP-driven potassium transport (or Kdp) system, which catalyzes the hydrolysis of ATP coupled with the electrogenic transport of potassium into the cytoplasm. This subunit binds the periplasmic potassium ions and delivers the ions to the membrane domain of KdpB through an intramembrane tunnel. The sequence is that of Potassium-transporting ATPase potassium-binding subunit from Anaeromyxobacter dehalogenans (strain 2CP-C).